A 1379-amino-acid polypeptide reads, in one-letter code: ABC multidrug transporter MDR2 (1379 aa).

A helical membrane pass occupies residues 65–85 (IALIVIGTIAGIGAGIPFPLL). Positions 69–367 (VIGTIAGIGA…MAPFMHIFAS (299 aa)) constitute an ABC transmembrane type-1 1 domain. A glycan (N-linked (GlcNAc...) asparagine) is linked at Asn97. The next 5 membrane-spanning stretches (helical) occupy residues 119–139 (VLQV…HTGC), 193–213 (KVGL…VAFL), 215–235 (VATI…MAFG), 301–321 (IQFG…FWQG), and 336–356 (VSVG…FVLS). The 280-residue stretch at 403–682 (IELQDVTFNY…DGVYAGMVRL (280 aa)) folds into the ABC transporter 1 domain. Residue 438–445 (GTSGSGKS) participates in ATP binding. N-linked (GlcNAc...) asparagine glycosylation is found at Asn552 and Asn633. The interval 738 to 758 (YMPEEADSLPTEPENEKEKPK) is disordered. Helical transmembrane passes span 781–801 (LGLI…VIFG), 820–840 (GMLF…AVIV), 901–921 (IGVL…SHVI), and 922–942 (AWRI…SGVL). Residues 781 to 1068 (LGLITSIMIG…MFALVPDISK (288 aa)) enclose the ABC transmembrane type-1 2 domain. N-linked (GlcNAc...) asparagine glycosylation occurs at Asn989. 2 helical membrane passes run 1008–1028 (FWLS…YWWG) and 1032–1052 (ILAG…LLFS). Residues 1135-1374 (VQFRNVHFRY…CESYRANVIH (240 aa)) form the ABC transporter 2 domain. 1170-1177 (GPSGSGKS) contacts ATP.

Belongs to the ABC transporter superfamily. ABCB family. Multidrug resistance exporter (TC 3.A.1.201) subfamily.

Its subcellular location is the cell membrane. Functionally, pleiotropic ABC efflux transporter that may be involved in the modulation susceptibility to a wide range of unrelated cytotoxic compounds. This is ABC multidrug transporter MDR2 from Trichophyton equinum (strain ATCC MYA-4606 / CBS 127.97) (Horse ringworm fungus).